The chain runs to 362 residues: 4-hydroxy-3-methylbut-2-en-1-yl diphosphate synthase (flavodoxin) (362 aa).

4 residues coordinate [4Fe-4S] cluster: cysteine 266, cysteine 269, cysteine 301, and glutamate 308.

Belongs to the IspG family. It depends on [4Fe-4S] cluster as a cofactor.

The enzyme catalyses (2E)-4-hydroxy-3-methylbut-2-enyl diphosphate + oxidized [flavodoxin] + H2O + 2 H(+) = 2-C-methyl-D-erythritol 2,4-cyclic diphosphate + reduced [flavodoxin]. The protein operates within isoprenoid biosynthesis; isopentenyl diphosphate biosynthesis via DXP pathway; isopentenyl diphosphate from 1-deoxy-D-xylulose 5-phosphate: step 5/6. Converts 2C-methyl-D-erythritol 2,4-cyclodiphosphate (ME-2,4cPP) into 1-hydroxy-2-methyl-2-(E)-butenyl 4-diphosphate. The polypeptide is 4-hydroxy-3-methylbut-2-en-1-yl diphosphate synthase (flavodoxin) (Malacoplasma penetrans (strain HF-2) (Mycoplasma penetrans)).